Here is a 440-residue protein sequence, read N- to C-terminus: Xaa-Pro dipeptidase (440 aa).

The Mn(2+) site is built by D246, D257, H337, E382, and E421.

Belongs to the peptidase M24B family. Bacterial-type prolidase subfamily. The cofactor is Mn(2+).

The catalysed reaction is Xaa-L-Pro dipeptide + H2O = an L-alpha-amino acid + L-proline. Its function is as follows. Splits dipeptides with a prolyl residue in the C-terminal position. This Aeromonas hydrophila subsp. hydrophila (strain ATCC 7966 / DSM 30187 / BCRC 13018 / CCUG 14551 / JCM 1027 / KCTC 2358 / NCIMB 9240 / NCTC 8049) protein is Xaa-Pro dipeptidase.